The primary structure comprises 178 residues: Putative peroxiredoxin in rubredoxin operon (178 aa).

Positions 3-163 (RLVGKPAPEF…TLRVLKAFQT (161 aa)) constitute a Thioredoxin domain. Cysteine 50 serves as the catalytic Cysteine sulfenic acid (-SOH) intermediate.

Belongs to the peroxiredoxin family. AhpC/Prx1 subfamily. As to quaternary structure, homodimer; disulfide-linked, upon oxidation.

Its subcellular location is the cytoplasm. It catalyses the reaction a hydroperoxide + [protein]-dithiol = [protein]-disulfide + an alcohol + H2O. In terms of biological role, thiol-specific peroxidase that catalyzes the reduction of hydrogen peroxide and organic hydroperoxides to water and alcohols, respectively. Plays a role in cell protection against oxidative stress by detoxifying peroxides. This Clostridium pasteurianum protein is Putative peroxiredoxin in rubredoxin operon.